A 142-amino-acid chain; its full sequence is Hemoglobin subunit alpha (142 aa).

Positions 2–142 constitute a Globin domain; it reads VLSAADKSNV…VGTVLTSKYR (141 aa). At Ser-4 the chain carries Phosphoserine. N6-succinyllysine occurs at positions 8 and 12. Lys-17 is modified (N6-acetyllysine; alternate). Lys-17 is subject to N6-succinyllysine; alternate. Position 25 is a phosphotyrosine (Tyr-25). Ser-36 is modified (phosphoserine). Lys-41 bears the N6-succinyllysine mark. Position 50 is a phosphoserine (Ser-50). Residue His-59 participates in O2 binding. His-88 contributes to the heme b binding site. The residue at position 103 (Ser-103) is a Phosphoserine. Phosphothreonine is present on Thr-109. Phosphoserine is present on residues Ser-125 and Ser-132. A phosphothreonine mark is found at Thr-135 and Thr-138. The residue at position 139 (Ser-139) is a Phosphoserine.

It belongs to the globin family. In terms of assembly, heterotetramer of two alpha chains and two beta chains. In terms of tissue distribution, red blood cells.

Involved in oxygen transport from the lung to the various peripheral tissues. In terms of biological role, hemopressin acts as an antagonist peptide of the cannabinoid receptor CNR1. Hemopressin-binding efficiently blocks cannabinoid receptor CNR1 and subsequent signaling. This Pantholops hodgsonii (Chiru) protein is Hemoglobin subunit alpha (HBA).